The following is a 355-amino-acid chain: Ornithine transcarbamylase, mitochondrial (355 aa).

The N-terminal 35 residues, 1 to 35 (MLFINLRTLLNNAALRNGHNFVVRNFRCGQPVQDK), are a transit peptide targeting the mitochondrion. Lys-71 carries the post-translational modification N6-acetyllysine; alternate. Residue Lys-71 is modified to N6-succinyllysine; alternate. At Lys-81 the chain carries N6-succinyllysine. Lys-89 is subject to N6-acetyllysine; alternate. Lys-89 is modified (N6-succinyllysine; alternate). 91 to 95 (STRTR) is a carbamoyl phosphate binding site. Ser-134 carries the post-translational modification Phosphoserine. Residue Arg-142 coordinates carbamoyl phosphate. Residue Arg-142 participates in L-ornithine binding. Position 145 is an N6-acetyllysine; alternate (Lys-145). Position 145 is an N6-succinyllysine; alternate (Lys-145). Residue His-169 participates in carbamoyl phosphate binding. Residue Asn-200 coordinates L-ornithine. An N6-acetyllysine; alternate mark is found at Lys-222, Lys-232, and Lys-239. Lys-222, Lys-232, and Lys-239 each carry N6-succinyllysine; alternate. N6-acetyllysine is present on Lys-244. 264–268 (DTWIS) is an L-ornithine binding site. N6-succinyllysine is present on residues Lys-275 and Lys-290. At Lys-293 the chain carries N6-acetyllysine; alternate. An N6-succinyllysine; alternate modification is found at Lys-293. 303-306 (HCLP) is an L-ornithine binding site. Residue Cys-304 is part of the active site. N6-acetyllysine; alternate is present on Lys-308. N6-succinyllysine; alternate is present on Lys-308. A carbamoyl phosphate-binding site is contributed by Arg-331. Arg-331 is an L-ornithine binding site.

It belongs to the aspartate/ornithine carbamoyltransferase superfamily. OTCase family. Homotrimer. Acetylation at Lys-89 negatively regulates ornithine carbamoyltransferase activity in response to nutrient signals.

It localises to the mitochondrion matrix. The catalysed reaction is carbamoyl phosphate + L-ornithine = L-citrulline + phosphate + H(+). It functions in the pathway nitrogen metabolism; urea cycle; L-citrulline from L-ornithine and carbamoyl phosphate: step 1/1. With respect to regulation, negatively regulated by lysine acetylation. In terms of biological role, catalyzes the second step of the urea cycle, the condensation of carbamoyl phosphate with L-ornithine to form L-citrulline. The urea cycle ensures the detoxification of ammonia by converting it to urea for excretion. The protein is Ornithine transcarbamylase, mitochondrial of Ovis aries (Sheep).